The sequence spans 457 residues: UDP-N-acetylmuramoylalanine--D-glutamate ligase (457 aa).

Gly-117–Thr-123 lines the ATP pocket.

Belongs to the MurCDEF family.

The protein resides in the cytoplasm. It carries out the reaction UDP-N-acetyl-alpha-D-muramoyl-L-alanine + D-glutamate + ATP = UDP-N-acetyl-alpha-D-muramoyl-L-alanyl-D-glutamate + ADP + phosphate + H(+). The protein operates within cell wall biogenesis; peptidoglycan biosynthesis. Its function is as follows. Cell wall formation. Catalyzes the addition of glutamate to the nucleotide precursor UDP-N-acetylmuramoyl-L-alanine (UMA). In Paramagnetospirillum magneticum (strain ATCC 700264 / AMB-1) (Magnetospirillum magneticum), this protein is UDP-N-acetylmuramoylalanine--D-glutamate ligase.